Consider the following 1690-residue polypeptide: Restin homolog (1690 aa).

Composition is skewed to polar residues over residues 1–11 (MSDDTSASGGT) and 39–51 (NIPT…TGIP). The tract at residues 1–105 (MSDDTSASGG…ESDDNLSSIN (105 aa)) is disordered. Phosphoserine occurs at positions 64 and 67. The 43-residue stretch at 143–185 (GDTHFAAGEWAGVVLDEPNGKNDGCVSGKRYFQCEPKRGIFSR) folds into the CAP-Gly 1 domain. Positions 195–227 (AGAQTPTSPLAKSSPDRSRTVSPTASIRSSMLR) are disordered. Residues 214–226 (TVSPTASIRSSML) are compositionally biased toward polar residues. The residue at position 216 (serine 216) is a Phosphoserine. The region spanning 260–302 (GETQFAPGNWCGVELDEPSGKNDGTVDDIRYFECKPKYGVFVP) is the CAP-Gly 2 domain. Phosphoserine is present on residues serine 309, serine 322, and serine 325. Threonine 327 is modified (phosphothreonine). Serine 328 carries the post-translational modification Phosphoserine. Threonine 362 is subject to Phosphothreonine. Coiled coils occupy residues 378-468 (QHVE…VSAT), 484-660 (GALQ…DMLR), 667-916 (EEKS…TKLK), 926-981 (LSSC…ELQA), 1001-1121 (ATGH…EAIQ), 1158-1549 (EADM…AQMN), and 1565-1600 (DIET…LETL). Positions 843–905 (QQAAASGEEG…GSLEEEAKKS (63 aa)) are disordered. Polar residues predominate over residues 865–885 (QLKSQAEETQSELKSTQSNLE). 2 disordered regions span residues 1031 to 1052 (QLQD…KEKS) and 1400 to 1419 (KLDE…NEIQ). Composition is skewed to basic and acidic residues over residues 1040-1052 (TKLK…KEKS) and 1410-1419 (SQKKSHNEIQ). A disordered region spans residues 1635-1665 (TEDCPIQGSEDQDYSTPSSESNNNEKERKLP). The residue at position 1681 (threonine 1681) is a Phosphothreonine. At serine 1682 the chain carries Phosphoserine.

As to quaternary structure, interacts with Lva. Specifically expressed at the tip of the furrow in cellularizing blastoderms. CLIP-190 and jar are coexpressed at several times in development and in a number of tissues, including embryonic axonal neuron processes and posterior pole.

The protein localises to the cytoplasm. It is found in the cytoskeleton. The protein resides in the golgi apparatus. Its subcellular location is the microtubule organizing center. It localises to the perinuclear region. Functionally, together CLIP-190 and jar may coordinate the interaction between the actin and microtubule cytoskeleton. May link endocytic vesicles to microtubules. May play a role in formation of furrows during cellularization. The protein is Restin homolog (CLIP-190) of Drosophila melanogaster (Fruit fly).